Reading from the N-terminus, the 332-residue chain is Methylthioribose-1-phosphate isomerase (332 aa).

Substrate is bound by residues 44–46 (RGA), Arg87, and Gln192. Catalysis depends on Asp233, which acts as the Proton donor. 243–244 (NK) lines the substrate pocket.

Belongs to the eIF-2B alpha/beta/delta subunits family. MtnA subfamily.

The enzyme catalyses 5-(methylsulfanyl)-alpha-D-ribose 1-phosphate = 5-(methylsulfanyl)-D-ribulose 1-phosphate. It functions in the pathway amino-acid biosynthesis; L-methionine biosynthesis via salvage pathway; L-methionine from S-methyl-5-thio-alpha-D-ribose 1-phosphate: step 1/6. In terms of biological role, catalyzes the interconversion of methylthioribose-1-phosphate (MTR-1-P) into methylthioribulose-1-phosphate (MTRu-1-P). This chain is Methylthioribose-1-phosphate isomerase, found in Dehalococcoides mccartyi (strain ATCC BAA-2100 / JCM 16839 / KCTC 5957 / BAV1).